The chain runs to 131 residues: Profilin-3 (131 aa).

It belongs to the profilin family. In terms of assembly, occurs in many kinds of cells as a complex with monomeric actin in a 1:1 ratio.

Its subcellular location is the cytoplasm. The protein resides in the cytoskeleton. Binds to actin and affects the structure of the cytoskeleton. At high concentrations, profilin prevents the polymerization of actin, whereas it enhances it at low concentrations. By binding to PIP2, it inhibits the formation of IP3 and DG. This Hevea brasiliensis (Para rubber tree) protein is Profilin-3.